The primary structure comprises 556 residues: Phenylalanine--tRNA ligase beta subunit (556 aa).

In terms of domain architecture, B5 spans 269 to 345 (MEPEEVVYDV…MGYGYERIEP (77 aa)). Mg(2+) contacts are provided by Asp-323, Asp-329, Glu-332, and Glu-333.

It belongs to the phenylalanyl-tRNA synthetase beta subunit family. Type 2 subfamily. In terms of assembly, tetramer of two alpha and two beta subunits. Mg(2+) is required as a cofactor.

It localises to the cytoplasm. It carries out the reaction tRNA(Phe) + L-phenylalanine + ATP = L-phenylalanyl-tRNA(Phe) + AMP + diphosphate + H(+). The protein is Phenylalanine--tRNA ligase beta subunit of Thermofilum pendens (strain DSM 2475 / Hrk 5).